The primary structure comprises 571 residues: MMLSNISQTKAELLSGLGSSLTSSPGNVSAATMKLEAVMENLQRQHQQRMMEQHKNDDVISNDVRCDDFSDGGERQRSYSGSPKEDSDEDRNDMTSPMMRDDDDVMQSDGRSPEPDKTSLITQQMAFAAALAQRSSPDGSLSSLVPQAMMQHFGQFPASFDASQLPQGFRELAMLQHQHVAQRMAMEAQKRMQQDHNIQQSTNHIPTPSSASSHTSSGSVTSQTNSCNGSQQEWTYEEQFKQLYEIDDDIKRKEFLDDLFSFMQKRGTPVNRIPIMAKQVLDLYQLYRLVVEKGGLVEVINKKIWREITKGLNLPSSITSAAFTLRTQYMKYLYPFECEREKLSVPSELQAAIEGNRREGRRPSYSSHMFSYSPNTSANMLTPPKFPFAHHNGLAQLSQMAAAKYGQPDERCLPTSPTQQLIAQQQQLLQSANAQHVAAMAALETIQNQAKARQAAQQAAHHAAQQAAQHQMSLKKEIDSDYSEGEPPEKKLSFDDSVRRLTPDNQRRSSTSSLKISMGDRGRHNEMSDVTNADSINICVEVNGITYQGVLFAHSPNHPPVKHVTLDHPTS.

2 disordered regions span residues 45–117 and 190–229; these read QHQQ…EPDK and KRMQQDHNIQQSTNHIPTPSSASSHTSSGSVTSQTNSCNG. Basic and acidic residues predominate over residues 49 to 77; that stretch reads RMMEQHKNDDVISNDVRCDDFSDGGERQR. The span at 195-206 shows a compositional bias: polar residues; that stretch reads DHNIQQSTNHIP. A compositionally biased stretch (low complexity) spans 207–224; the sequence is TPSSASSHTSSGSVTSQT. Residues 249–341 form the ARID domain; it reads DIKRKEFLDD…YLYPFECERE (93 aa). The span at 459-471 shows a compositional bias: low complexity; the sequence is AAHHAAQQAAQHQ. The segment at 459–528 is disordered; it reads AAHHAAQQAA…GDRGRHNEMS (70 aa). An REKLES domain is found at 473-558; the sequence is SLKKEIDSDY…GVLFAHSPNH (86 aa). 2 stretches are compositionally biased toward basic and acidic residues: residues 487 to 507 and 518 to 527; these read PPEKKLSFDDSVRRLTPDNQR and MGDRGRHNEM.

The protein localises to the nucleus. Transcription factor. The polypeptide is Protein dead ringer homolog (Ci-DRIL1/2) (Ciona intestinalis (Transparent sea squirt)).